The sequence spans 387 residues: 3-ketoacyl-CoA thiolase (387 aa).

Cysteine 91 functions as the Acyl-thioester intermediate in the catalytic mechanism. Residues histidine 343 and cysteine 373 each act as proton acceptor in the active site.

This sequence belongs to the thiolase-like superfamily. Thiolase family. As to quaternary structure, heterotetramer of two alpha chains (FadB) and two beta chains (FadA).

It localises to the cytoplasm. It catalyses the reaction an acyl-CoA + acetyl-CoA = a 3-oxoacyl-CoA + CoA. It participates in lipid metabolism; fatty acid beta-oxidation. In terms of biological role, catalyzes the final step of fatty acid oxidation in which acetyl-CoA is released and the CoA ester of a fatty acid two carbons shorter is formed. This is 3-ketoacyl-CoA thiolase from Escherichia coli O1:K1 / APEC.